A 557-amino-acid chain; its full sequence is MVSKLTSLQQELLSALLSSGVTKEVLVQALEELLPSPNFGVKLETLPLSPGSGAEPDTKPVFHTLTNGHAKGRLSGDEGSEDGDDYDTPPILKELQALNTEEAAEQRAEVDRMLSEDPWRAAKMIKGYMQQHNIPQREVVDVTGLNQSHLSQHLNKGTPMKTQKRAALYTWYVRKQREILRQFNQTVQSSGNMTDKSSQDQLLFLFPEFSQQSHGPGQSDDACSEPTNKKMRRNRFKWGPASQQILYQAYDRQKNPSKEEREALVEECNRAECLQRGVSPSKAHGLGSNLVTEVRVYNWFANRRKEEAFRQKLAMDAYSSNQTHSLNPLLSHGSPHHQPSSSPPNKLSGVRYSQQGNNEITSSSTISHHGNSAMVTSQSVLQQVSPASLDPGHNLLSPDGKMISVSGGGLPPVSTLTNIHSLSHHNPQQSQNLIMTPLSGVMAIAQSLNTSQAQSVPVINSVAGSLAALQPVQFSQQLHSPHQQPLMQQSPGSHMAQQPFMAAVTQLQNSHMYAHKQEPPQYSHTSRFPSAMVVTDTSSISTLTNMSSSKQCPLQAW.

The segment at 1-31 is dimerization; it reads MVSKLTSLQQELLSALLSSGVTKEVLVQALE. The HNF-p1 domain occupies 1–32; the sequence is MVSKLTSLQQELLSALLSSGVTKEVLVQALEE. Serine 49, serine 52, serine 75, and serine 80 each carry phosphoserine. Positions 64–85 are disordered; that stretch reads TLTNGHAKGRLSGDEGSEDGDD. Residues 93–188 enclose the POU-specific atypical domain; it reads KELQALNTEE…ILRQFNQTVQ (96 aa). Positions 231–311 form a DNA-binding region, homeobox; HNF1-type; it reads MRRNRFKWGP…NRRKEEAFRQ (81 aa). The tract at residues 324 to 352 is disordered; that stretch reads HSLNPLLSHGSPHHQPSSSPPNKLSGVRY. The span at 328 to 344 shows a compositional bias: low complexity; that stretch reads PLLSHGSPHHQPSSSPP.

The protein belongs to the HNF1 homeobox family. As to quaternary structure, binds DNA as a dimer. Can form homodimer or heterodimer with HNF1-alpha. Interacts (via HNF-p1 domain) with PCBD1; the interaction increases its transactivation activity.

Its subcellular location is the nucleus. In terms of biological role, transcription factor that binds to the inverted palindrome 5'-GTTAATNATTAAC-3'. Binds to the FPC element in the cAMP regulatory unit of the PLAU gene. Transcriptional activity is increased by coactivator PCBD1. The sequence is that of Hepatocyte nuclear factor 1-beta (HNF1B) from Homo sapiens (Human).